The sequence spans 379 residues: 1-deoxy-D-xylulose 5-phosphate reductoisomerase (379 aa).

Thr10, Gly11, Ser12, Ile13, Asn39, and Asn121 together coordinate NADPH. 1-deoxy-D-xylulose 5-phosphate is bound at residue Lys122. Residue Glu123 coordinates NADPH. Asp147 provides a ligand contact to Mn(2+). 4 residues coordinate 1-deoxy-D-xylulose 5-phosphate: Ser148, Glu149, Ser173, and His196. Glu149 is a Mn(2+) binding site. Position 202 (Gly202) interacts with NADPH. 1-deoxy-D-xylulose 5-phosphate contacts are provided by Ser209, Asn214, Lys215, and Glu218. A Mn(2+)-binding site is contributed by Glu218.

It belongs to the DXR family. Mg(2+) is required as a cofactor. Requires Mn(2+) as cofactor.

It carries out the reaction 2-C-methyl-D-erythritol 4-phosphate + NADP(+) = 1-deoxy-D-xylulose 5-phosphate + NADPH + H(+). It functions in the pathway isoprenoid biosynthesis; isopentenyl diphosphate biosynthesis via DXP pathway; isopentenyl diphosphate from 1-deoxy-D-xylulose 5-phosphate: step 1/6. In terms of biological role, catalyzes the NADPH-dependent rearrangement and reduction of 1-deoxy-D-xylulose-5-phosphate (DXP) to 2-C-methyl-D-erythritol 4-phosphate (MEP). This Chlamydia pneumoniae (Chlamydophila pneumoniae) protein is 1-deoxy-D-xylulose 5-phosphate reductoisomerase.